We begin with the raw amino-acid sequence, 347 residues long: NADH-ubiquinone oxidoreductase chain 2 (347 aa).

The next 9 helical transmembrane spans lie at P3–S23, Y59–L79, L89–A109, N150–L170, I178–P198, M201–I221, L237–L257, I276–I296, and L326–L346.

Belongs to the complex I subunit 2 family. Core subunit of respiratory chain NADH dehydrogenase (Complex I) which is composed of 45 different subunits. Interacts with TMEM242.

The protein localises to the mitochondrion inner membrane. It catalyses the reaction a ubiquinone + NADH + 5 H(+)(in) = a ubiquinol + NAD(+) + 4 H(+)(out). In terms of biological role, core subunit of the mitochondrial membrane respiratory chain NADH dehydrogenase (Complex I) which catalyzes electron transfer from NADH through the respiratory chain, using ubiquinone as an electron acceptor. Essential for the catalytic activity and assembly of complex I. The polypeptide is NADH-ubiquinone oxidoreductase chain 2 (Nyctophilus arnhemensis (Northern long-eared bat)).